An 85-amino-acid polypeptide reads, in one-letter code: BmK AGP-SYPU2 (85 aa).

An N-terminal signal peptide occupies residues 1–19 (MNYMVIISLALLVMTGVES). The LCN-type CS-alpha/beta domain maps to 21 to 83 (KDGYIADDRN…ARIMKPGRCN (63 aa)). 4 cysteine pairs are disulfide-bonded: Cys31–Cys82, Cys35–Cys55, Cys41–Cys65, and Cys45–Cys67.

Belongs to the long (4 C-C) scorpion toxin superfamily. Sodium channel inhibitor family. Alpha subfamily. Expressed by the venom gland.

It is found in the secreted. Alpha toxins bind voltage-independently at site-3 of sodium channels (Nav) and inhibit the inactivation of the activated channels, thereby blocking neuronal transmission. Shows analgesic activity when intraperitoneally injected into mice. The polypeptide is BmK AGP-SYPU2 (Olivierus martensii (Manchurian scorpion)).